Here is a 395-residue protein sequence, read N- to C-terminus: Beta-1,4-galactosyltransferase 3 (395 aa).

Topologically, residues Met1–Cys10 are cytoplasmic. A helical; Signal-anchor for type II membrane protein transmembrane segment spans residues Thr11 to Phe31. Residues Arg32–His395 are Lumenal-facing. An N-linked (GlcNAc...) asparagine glycan is attached at Asn57. Cys79 and Cys121 form a disulfide bridge. Pro132–Arg136 serves as a coordination point for UDP-alpha-D-galactose. N-linked (GlcNAc...) asparagine glycosylation is present at Asn168. Residues Phe171–Arg173, Val198–Asp199, Tyr228, and Trp260 contribute to the UDP-alpha-D-galactose site. Cys192 and Cys211 are oxidised to a cystine. Asp199 contributes to the Mn(2+) binding site. An N-acetyl-D-glucosamine-binding site is contributed by Gly262–Asp265. His293 lines the Mn(2+) pocket. Position 293 to 295 (His293 to Gly295) interacts with UDP-alpha-D-galactose. Arg305 contributes to the N-acetyl-D-glucosamine binding site. N-linked (GlcNAc...) asparagine glycans are attached at residues Asn339 and Asn387. Residues Thr341–His395 form a disordered region.

This sequence belongs to the glycosyltransferase 7 family. The cofactor is Mn(2+).

The protein resides in the golgi apparatus. Its subcellular location is the golgi stack membrane. It carries out the reaction an N-acetyl-beta-D-glucosaminyl derivative + UDP-alpha-D-galactose = a beta-D-galactosyl-(1-&gt;4)-N-acetyl-beta-D-glucosaminyl derivative + UDP + H(+). It catalyses the reaction N-acetyl-D-glucosamine + UDP-alpha-D-galactose = beta-D-galactosyl-(1-&gt;4)-N-acetyl-D-glucosamine + UDP + H(+). The enzyme catalyses a beta-D-GlcNAc-(1-&gt;3)-beta-D-Gal-(1-&gt;4)-beta-D-Glc-(1&lt;-&gt;1)-Cer(d18:1(4E)) + UDP-alpha-D-galactose = a neolactoside nLc4Cer(d18:1(4E)) + UDP + H(+). The catalysed reaction is a beta-D-glucosylceramide + UDP-alpha-D-galactose = a beta-D-galactosyl-(1-&gt;4)-beta-D-glucosyl-(1&lt;-&gt;1)-ceramide + UDP + H(+). It carries out the reaction a neolactoside IV(3)-beta-GlcNAc-nLc4Cer + UDP-alpha-D-galactose = a neolactoside nLc6Cer + UDP + H(+). It participates in protein modification; protein glycosylation. Functionally, responsible for the synthesis of complex-type N-linked oligosaccharides in many glycoproteins as well as the carbohydrate moieties of glycolipids. The polypeptide is Beta-1,4-galactosyltransferase 3 (Rattus norvegicus (Rat)).